A 321-amino-acid chain; its full sequence is Lipoyl synthase (321 aa).

Residues Cys68, Cys73, Cys79, Cys94, Cys98, Cys101, and Ser308 each contribute to the [4Fe-4S] cluster site. The 218-residue stretch at 80 to 297 folds into the Radical SAM core domain; the sequence is FNHGTATFMI…KAEAMAMGFT (218 aa).

The protein belongs to the radical SAM superfamily. Lipoyl synthase family. It depends on [4Fe-4S] cluster as a cofactor.

Its subcellular location is the cytoplasm. It catalyses the reaction [[Fe-S] cluster scaffold protein carrying a second [4Fe-4S](2+) cluster] + N(6)-octanoyl-L-lysyl-[protein] + 2 oxidized [2Fe-2S]-[ferredoxin] + 2 S-adenosyl-L-methionine + 4 H(+) = [[Fe-S] cluster scaffold protein] + N(6)-[(R)-dihydrolipoyl]-L-lysyl-[protein] + 4 Fe(3+) + 2 hydrogen sulfide + 2 5'-deoxyadenosine + 2 L-methionine + 2 reduced [2Fe-2S]-[ferredoxin]. Its pathway is protein modification; protein lipoylation via endogenous pathway; protein N(6)-(lipoyl)lysine from octanoyl-[acyl-carrier-protein]: step 2/2. Catalyzes the radical-mediated insertion of two sulfur atoms into the C-6 and C-8 positions of the octanoyl moiety bound to the lipoyl domains of lipoate-dependent enzymes, thereby converting the octanoylated domains into lipoylated derivatives. The sequence is that of Lipoyl synthase from Klebsiella pneumoniae (strain 342).